Reading from the N-terminus, the 297-residue chain is Acetyl-coenzyme A carboxylase carboxyl transferase subunit beta (297 aa).

A CoA carboxyltransferase N-terminal domain is found at Leu-27–Val-296. Cys-31, Cys-34, Cys-50, and Cys-53 together coordinate Zn(2+). The C4-type zinc finger occupies Cys-31–Cys-53.

Belongs to the AccD/PCCB family. As to quaternary structure, acetyl-CoA carboxylase is a heterohexamer composed of biotin carboxyl carrier protein (AccB), biotin carboxylase (AccC) and two subunits each of ACCase subunit alpha (AccA) and ACCase subunit beta (AccD). The cofactor is Zn(2+).

It localises to the cytoplasm. It carries out the reaction N(6)-carboxybiotinyl-L-lysyl-[protein] + acetyl-CoA = N(6)-biotinyl-L-lysyl-[protein] + malonyl-CoA. It participates in lipid metabolism; malonyl-CoA biosynthesis; malonyl-CoA from acetyl-CoA: step 1/1. In terms of biological role, component of the acetyl coenzyme A carboxylase (ACC) complex. Biotin carboxylase (BC) catalyzes the carboxylation of biotin on its carrier protein (BCCP) and then the CO(2) group is transferred by the transcarboxylase to acetyl-CoA to form malonyl-CoA. The protein is Acetyl-coenzyme A carboxylase carboxyl transferase subunit beta of Pseudomonas putida (strain GB-1).